The primary structure comprises 61 residues: Large ribosomal subunit protein uL29 (61 aa).

The protein belongs to the universal ribosomal protein uL29 family.

This is Large ribosomal subunit protein uL29 from Stenotrophomonas maltophilia (strain R551-3).